A 530-amino-acid polypeptide reads, in one-letter code: UPF0422 protein lpp3030 (530 aa).

Residues 1–19 form the signal peptide; it reads MKFKKIILALACLSSPLYA. A coiled-coil region spans residues 20–66; it reads DQDQQLKSEIQRLQHQAEDLQAQLNRLQKQLANHKSSQQKHEQQAAA. Positions 50 to 81 are disordered; the sequence is LANHKSSQQKHEQQAAAKPAEPKSKPTTKSGA. The span at 63-79 shows a compositional bias: low complexity; the sequence is QAAAKPAEPKSKPTTKS.

It belongs to the UPF0422 family.

This chain is UPF0422 protein lpp3030, found in Legionella pneumophila (strain Paris).